The chain runs to 404 residues: Probable RNA polymerase sigma-C factor (404 aa).

The Polymerase core binding signature appears at 193–206; it reads DLIQEGTLGLERAV. A DNA-binding region (H-T-H motif) is located at residues 362–381; sequence LSEIGRILNLSRERVRQIEA.

Belongs to the sigma-70 factor family.

Sigma factors are initiation factors that promote the attachment of RNA polymerase to specific initiation sites and are then released. This is Probable RNA polymerase sigma-C factor (sigC) from Synechocystis sp. (strain ATCC 27184 / PCC 6803 / Kazusa).